A 432-amino-acid chain; its full sequence is Adenylosuccinate synthetase (432 aa).

GTP is bound by residues Gly13 to Lys19 and Gly41 to Thr43. Catalysis depends on Asp14, which acts as the Proton acceptor. 2 residues coordinate Mg(2+): Asp14 and Gly41. Residues Asp14 to Lys17, Asn39 to His42, Thr130, Arg144, Gln225, Thr240, and Arg306 each bind IMP. His42 functions as the Proton donor in the catalytic mechanism. Thr302–Arg308 is a substrate binding site. Residues Arg308, Lys334–Asp336, and Ser416–Gly418 each bind GTP.

It belongs to the adenylosuccinate synthetase family. As to quaternary structure, homodimer. Mg(2+) serves as cofactor.

Its subcellular location is the cytoplasm. The catalysed reaction is IMP + L-aspartate + GTP = N(6)-(1,2-dicarboxyethyl)-AMP + GDP + phosphate + 2 H(+). Its pathway is purine metabolism; AMP biosynthesis via de novo pathway; AMP from IMP: step 1/2. Plays an important role in the de novo pathway of purine nucleotide biosynthesis. Catalyzes the first committed step in the biosynthesis of AMP from IMP. The sequence is that of Adenylosuccinate synthetase from Herminiimonas arsenicoxydans.